The primary structure comprises 1087 residues: Band 4.1-like protein 3 (1087 aa).

N-acetylmethionine is present on Met-1. The tract at residues 1-43 (MTTESGSDSESKPDQEAEPQEAAGAQGRAGAPVPEPPKEEQQQ) is disordered. Thr-2 is modified (N-acetylthreonine; in Band 4.1-like protein 3, N-terminally processed). Residues 20–32 (QEAAGAQGRAGAP) are compositionally biased toward low complexity. Phosphoserine is present on Ser-88. The FERM domain maps to 110–391 (MQCKVILLDG…EHHTFFRLLL (282 aa)). Positions 394–513 (APPKKFLTLG…PGLGTDSCPL (120 aa)) are hydrophilic. Phosphoserine is present on residues Ser-420, Ser-443, and Ser-460. The segment covering 459-469 (ISQTNLITTVT) has biased composition (polar residues). Disordered regions lie at residues 459 to 529 (ISQT…TELR), 541 to 563 (GYEP…GPGR), 675 to 715 (SASL…EDAE), and 937 to 965 (SETL…SPGG). Phosphothreonine is present on residues Thr-469 and Thr-492. Residues 514-860 (SPPSTHCAPT…VVQETVLVEE (347 aa)) form a spectrin--actin-binding region. A compositionally biased stretch (polar residues) spans 516–526 (PSTHCAPTSPT). Acidic residues predominate over residues 681 to 691 (DPSDSSEEETD). Over residues 698 to 707 (AADGETTATE) the composition is skewed to low complexity. At Thr-706 the chain carries Phosphothreonine. Residues Ser-708, Ser-960, and Ser-962 each carry the phosphoserine modification. A C-terminal (CTD) region spans residues 861–1083 (RRVVHASGDA…VHKETEITPE (223 aa)). A compositionally biased stretch (polar residues) spans 947 to 960 (ESSTVKTETISFGS). A Phosphothreonine modification is found at Thr-1081.

In terms of assembly, interacts (via FERM domain) with CADM1. Interacts (via FERM domain) with PRMT3; the interaction is direct and inhibits the protein-arginine N-methyltransferase activity of PRMT3. Interacts with PRMT5. Interacts with PRMT6. As to expression, expressed at high levels in brain, with lower levels in kidney, intestine, and testis. Detected in lung.

Its subcellular location is the cytoplasm. The protein resides in the cytoskeleton. It localises to the cell junction. It is found in the cell membrane. Its function is as follows. Tumor suppressor that inhibits cell proliferation and promotes apoptosis. Modulates the activity of protein arginine N-methyltransferases, including PRMT3 and PRMT5. This Homo sapiens (Human) protein is Band 4.1-like protein 3.